Reading from the N-terminus, the 249-residue chain is 2,3-bisphosphoglycerate-dependent phosphoglycerate mutase (249 aa).

Substrate contacts are provided by residues 7-14 (RHGESEWN), 20-21 (TG), Arg-59, 86-89 (ERHY), Lys-97, 113-114 (RR), and 182-183 (GN). The Tele-phosphohistidine intermediate role is filled by His-8. The active-site Proton donor/acceptor is Glu-86.

The protein belongs to the phosphoglycerate mutase family. BPG-dependent PGAM subfamily.

The enzyme catalyses (2R)-2-phosphoglycerate = (2R)-3-phosphoglycerate. It functions in the pathway carbohydrate degradation; glycolysis; pyruvate from D-glyceraldehyde 3-phosphate: step 3/5. Its function is as follows. Catalyzes the interconversion of 2-phosphoglycerate and 3-phosphoglycerate. This chain is 2,3-bisphosphoglycerate-dependent phosphoglycerate mutase, found in Lachnoclostridium phytofermentans (strain ATCC 700394 / DSM 18823 / ISDg) (Clostridium phytofermentans).